The primary structure comprises 734 residues: Ribosomal RNA large subunit methyltransferase K/L (734 aa).

Residues 49-167 (HAYRICMWSR…KTEHTYCLDL (119 aa)) form the THUMP domain.

This sequence belongs to the methyltransferase superfamily. RlmKL family.

The protein resides in the cytoplasm. It carries out the reaction guanosine(2445) in 23S rRNA + S-adenosyl-L-methionine = N(2)-methylguanosine(2445) in 23S rRNA + S-adenosyl-L-homocysteine + H(+). It catalyses the reaction guanosine(2069) in 23S rRNA + S-adenosyl-L-methionine = N(2)-methylguanosine(2069) in 23S rRNA + S-adenosyl-L-homocysteine + H(+). Specifically methylates the guanine in position 2445 (m2G2445) and the guanine in position 2069 (m7G2069) of 23S rRNA. This chain is Ribosomal RNA large subunit methyltransferase K/L, found in Acinetobacter baumannii (strain ACICU).